We begin with the raw amino-acid sequence, 789 residues long: LPS-assembly protein LptD (789 aa).

An N-terminal signal peptide occupies residues 1 to 39 (MPPRQLSQTTPSCAVVPRKRRLVAALIAVPGLMPALAHA).

Belongs to the LptD family. As to quaternary structure, component of the lipopolysaccharide transport and assembly complex. Interacts with LptE and LptA.

It is found in the cell outer membrane. Its function is as follows. Together with LptE, is involved in the assembly of lipopolysaccharide (LPS) at the surface of the outer membrane. The sequence is that of LPS-assembly protein LptD from Paraburkholderia xenovorans (strain LB400).